The chain runs to 283 residues: 4-diphosphocytidyl-2-C-methyl-D-erythritol kinase (283 aa).

Lysine 11 is a catalytic residue. Position 94–104 (94–104) interacts with ATP; that stretch reads PVAAGLAGGSA. Aspartate 136 is a catalytic residue.

The protein belongs to the GHMP kinase family. IspE subfamily.

It catalyses the reaction 4-CDP-2-C-methyl-D-erythritol + ATP = 4-CDP-2-C-methyl-D-erythritol 2-phosphate + ADP + H(+). The protein operates within isoprenoid biosynthesis; isopentenyl diphosphate biosynthesis via DXP pathway; isopentenyl diphosphate from 1-deoxy-D-xylulose 5-phosphate: step 3/6. Functionally, catalyzes the phosphorylation of the position 2 hydroxy group of 4-diphosphocytidyl-2C-methyl-D-erythritol. In Acetivibrio thermocellus (strain ATCC 27405 / DSM 1237 / JCM 9322 / NBRC 103400 / NCIMB 10682 / NRRL B-4536 / VPI 7372) (Clostridium thermocellum), this protein is 4-diphosphocytidyl-2-C-methyl-D-erythritol kinase.